We begin with the raw amino-acid sequence, 219 residues long: RPA-interacting protein (219 aa).

S18 bears the Phosphoserine mark. K121 participates in a covalent cross-link: Glycyl lysine isopeptide (Lys-Gly) (interchain with G-Cter in SUMO); in isoform 2. The RIP-type zinc-finger motif lies at 137 to 212; it reads CPVCTKYNLR…SSLLMSCLAC (76 aa). The segment at 164–180 is mediates nuclear export; the sequence is SSELTEQKLRACLEGSI.

Interacts with the RPA1 subunit of RPA complex. In terms of processing, sumoylated. Sumoylation is required for localization in the nuclear PML body and transport of RPA complex in PML body. Upon UV irradiation and during S phase, it is desumoylated, releasing RPA complex that is translocated to sites of DNA damage. Sumoylation takes place at different Lys residues. Variant 'Lys-103' adds a sumoylation site and increases total sumoylation levels. As to expression, widely expressed. Expressed in pancreas, kidney, muscle, liver, lung, placenta, brain, heart, leukocytes, colon, intestine, ovary, testis, prostate, thymus and spleen.

The protein resides in the cytoplasm. It is found in the nucleus. The protein localises to the PML body. In terms of biological role, mediates the import of RPA complex into the nucleus, possibly via some interaction with importin beta. Isoform 2 is sumoylated and mediates the localization of RPA complex into the PML body of the nucleus, thereby participating in RPA function in DNA metabolism. This Homo sapiens (Human) protein is RPA-interacting protein (RPAIN).